The following is a 472-amino-acid chain: H(+)/Cl(-) exchange transporter ClcA (472 aa).

Residues 1-32 are Cytoplasmic-facing; it reads MKAETPSFEAHQFVRVRRGDAVRRLIQRDKTP. A helical membrane pass occupies residues 33–69; it reads LAVLFMAAVVGTLAGLVGVAFEKSVNWVQNQRIGALA. The Periplasmic portion of the chain corresponds to 70 to 76; it reads QVADHWY. Residues 77–100 traverse the membrane as a helical segment; that stretch reads LVWPLAFILSALLAMVGYFLVRRF. The short motif at 106–110 is the Selectivity filter part_1 element; the sequence is GSGIP. Serine 107 provides a ligand contact to chloride. Positions 109–116 form an intramembrane region, helical; that stretch reads IPEIEGAL. Topologically, residues 117–123 are cytoplasmic; that stretch reads EELRPVR. The next 2 membrane-spanning stretches (helical) occupy residues 124–141 and 148–166; these read WWRV…TLGA and EGPM…LDVF. The short motif at 146-150 is the Selectivity filter part_2 element; that stretch reads GREGP. Residues 167–176 lie on the Cytoplasmic side of the membrane; the sequence is RMRSPEARHT. 2 consecutive intramembrane regions (helical) follow at residues 177 to 189 and 193 to 201; these read LLAT…LSAA and PLAGILFII. Topologically, residues 202 to 214 are cytoplasmic; it reads EEMRPQFRYNLIS. The helical transmembrane segment at 215–232 threads the bilayer; it reads IKAVFTGVIMSSIVFRIF. The Periplasmic segment spans residues 233-252; that stretch reads NGEAAIIEVGKLSNAPVNTL. Residues 253–281 form a helical membrane-spanning segment; that stretch reads WLYLVLGMLFGCFGPLFNFLVLRTQDLFQ. At 282-287 the chain is on the cytoplasmic side; it reads RIHGGN. The helical transmembrane segment at 288–309 threads the bilayer; it reads IKKWVLIGGLIGGLCGLLGLMQ. Residues 310–329 are Periplasmic-facing; sequence PSAVGGGFNLIPIAAAGNFS. The next 2 membrane-spanning stretches (helical) occupy residues 330 to 349 and 355 to 376; these read VGLL…ICFS and GIFA…MAAI. Residues 355-359 carry the Selectivity filter part_3 motif; the sequence is GIFAP. Residues isoleucine 356 and phenylalanine 357 each coordinate chloride. Residues 377-386 are Periplasmic-facing; sequence PLFPAYHLDA. The segment at residues 387 to 401 is an intramembrane region (helical); sequence GTFAIAGMGALLAAS. The note=Loop between two helices intramembrane region spans 402–404; sequence VRA. The segment at residues 405 to 416 is an intramembrane region (helical); the sequence is PLTGIVLVLEMT. Positions 417–421 form an intramembrane region, note=Loop between two helices; the sequence is DNYQL. Residues 422 to 438 traverse the membrane as a helical segment; sequence ILPMIITCLGATLLAQF. Residues 439–472 are Cytoplasmic-facing; that stretch reads LGGKPLYSTILQRTLAKQEAEQAAKAQQAPRENT. Residue tyrosine 445 coordinates chloride.

Belongs to the chloride channel (TC 2.A.49) family. ClcA subfamily. Homodimer.

The protein resides in the cell inner membrane. It catalyses the reaction 2 chloride(in) + H(+)(out) = 2 chloride(out) + H(+)(in). Its function is as follows. Proton-coupled chloride transporter. Functions as antiport system and exchanges two chloride ions for 1 proton. Probably acts as an electrical shunt for an outwardly-directed proton pump that is linked to amino acid decarboxylation, as part of the extreme acid resistance (XAR) response. The sequence is that of H(+)/Cl(-) exchange transporter ClcA from Klebsiella pneumoniae subsp. pneumoniae (strain ATCC 700721 / MGH 78578).